The primary structure comprises 549 residues: Oxygen-dependent choline dehydrogenase (549 aa).

4–33 (DFVIIGSGSAGSAMAYRLSEDGRYSVIVIE) is an FAD binding site. Catalysis depends on His465, which acts as the Proton acceptor.

This sequence belongs to the GMC oxidoreductase family. It depends on FAD as a cofactor.

The catalysed reaction is choline + A = betaine aldehyde + AH2. It carries out the reaction betaine aldehyde + NAD(+) + H2O = glycine betaine + NADH + 2 H(+). The protein operates within amine and polyamine biosynthesis; betaine biosynthesis via choline pathway; betaine aldehyde from choline (cytochrome c reductase route): step 1/1. Functionally, involved in the biosynthesis of the osmoprotectant glycine betaine. Catalyzes the oxidation of choline to betaine aldehyde and betaine aldehyde to glycine betaine at the same rate. The chain is Oxygen-dependent choline dehydrogenase from Brucella melitensis biotype 1 (strain ATCC 23456 / CCUG 17765 / NCTC 10094 / 16M).